The sequence spans 424 residues: MLSAEQNDKLARVGPGTPMGELLRRYWHPIGGESEFETKATRPVRLMGEDLVLYKDLSGNYGLMDRHCPHRRADMACGMVEADGLRCSYHGWMFDAQGACTEQPFEDTANPKGRYKDKVRIKAYPVRALGGLLWAYMGPLPAPELPDWEPFSWKNGFRQIVISVLPCNWLQGQENSMDPIHFEWMHANWSKRLRGETGPYGPKHLKIDFREYDYGFTYNRIREDTDETNPLWTIGRACLWPNAMFTGDHFEYRVPIDDETMMSVGWFFTRVPRDAEPYVQESIPVWHGPIKDAQGEWITSHVMNQDFVAWIGQGTISDRTQENLGLSDKGIGMMRRQFLRDMEKISRGEDPKAIIRDPAINKAIPLPTIHRDAVMEGMTAEEIEAGGALHLKRFIFQYGQPEHVLKMQQDAMRISQDNKGYVDA.

A Rieske domain is found at 27–135; it reads WHPIGGESEF…VRALGGLLWA (109 aa). [2Fe-2S] cluster contacts are provided by cysteine 68, histidine 70, cysteine 87, and histidine 90. Histidine 181, histidine 186, and aspartate 306 together coordinate Fe cation.

This sequence belongs to the bacterial ring-hydroxylating dioxygenase alpha subunit family. As to quaternary structure, homotrimer. The three-component monooxygenase is composed of an oxygenase (LigXa), a ferredoxin (LigXc) and a ferredoxin reductase (LigXd). It depends on [2Fe-2S] cluster as a cofactor. Fe cation is required as a cofactor.

The catalysed reaction is 5,5'-dehydrodivanillate + NADH + O2 + H(+) = 2,2',3-trihydroxy-3'-methoxy-5,5'-dicarboxybiphenyl + formaldehyde + NAD(+) + H2O. In terms of biological role, involved in the catabolism of 5,5'-dehydrodivanillate (DDVA), an intermediate in the biodegradation of lignin. Part of a three-component monooxygenase that catalyzes the O-demethylation of DDVA, leading to the formation of 2,2',3-trihydroxy-3'-methoxy-5,5'-dicarboxybiphenyl (OH-DDVA). This Sphingobium sp. (strain NBRC 103272 / SYK-6) protein is 5,5'-dehydrodivanillate O-demethylase oxygenase subunit.